Reading from the N-terminus, the 92-residue chain is Small ribosomal subunit protein uS19 (92 aa).

This sequence belongs to the universal ribosomal protein uS19 family.

In terms of biological role, protein S19 forms a complex with S13 that binds strongly to the 16S ribosomal RNA. The chain is Small ribosomal subunit protein uS19 (rpsS) from Synechocystis sp. (strain ATCC 27184 / PCC 6803 / Kazusa).